Reading from the N-terminus, the 536-residue chain is 2-isopropylmalate synthase (536 aa).

In terms of domain architecture, Pyruvate carboxyltransferase spans 8-273; the sequence is VLIFDTTLRD…FFGKDSESPT (266 aa). Positions 17, 208, 210, and 244 each coordinate Mn(2+). Residues 408 to 536 are regulatory domain; the sequence is KLHLVQVSCG…PQHDVVKANL (129 aa).

Belongs to the alpha-IPM synthase/homocitrate synthase family. LeuA type 1 subfamily. In terms of assembly, homodimer. It depends on Mn(2+) as a cofactor.

The protein localises to the cytoplasm. It carries out the reaction 3-methyl-2-oxobutanoate + acetyl-CoA + H2O = (2S)-2-isopropylmalate + CoA + H(+). It functions in the pathway amino-acid biosynthesis; L-leucine biosynthesis; L-leucine from 3-methyl-2-oxobutanoate: step 1/4. Its function is as follows. Catalyzes the condensation of the acetyl group of acetyl-CoA with 3-methyl-2-oxobutanoate (2-ketoisovalerate) to form 3-carboxy-3-hydroxy-4-methylpentanoate (2-isopropylmalate). The protein is 2-isopropylmalate synthase of Prochlorococcus marinus (strain SARG / CCMP1375 / SS120).